The primary structure comprises 150 residues: Centrin-B (150 aa).

3 EF-hand domains span residues 12–46, 80–114, and 115–150; these read DQISEIKESFDMFKSDNGKLDNDQIKYAFKALGCE, DSMSTLEQAFKLFVKDGSGITFKDLKKVAINIGEE, and CSDSDLYDMIEFADTDGDGVINKSEFISLMTTKKVL. Ca(2+) is bound by residues D128, D130, D132, and E139.

The protein belongs to the centrin family.

The protein localises to the cytoplasm. It localises to the cytoskeleton. It is found in the microtubule organizing center. The protein resides in the centrosome. Functionally, plays a fundamental role in microtubule-organizing center structure and function. This chain is Centrin-B (cenB), found in Dictyostelium discoideum (Social amoeba).